A 1171-amino-acid chain; its full sequence is ATP-dependent helicase/deoxyribonuclease subunit B (1171 aa).

Residues 1–301 enclose the UvrD-like helicase ATP-binding domain; it reads MSLRFVIGRA…AHLEMHYEAR (301 aa). Position 8–15 (8–15) interacts with ATP; the sequence is GRAGSGKS. One can recognise a UvrD-like helicase C-terminal domain in the interval 281–587; it reads MKQPRFHSQA…QFANIPPSLD (307 aa). Residues cysteine 805, cysteine 1129, cysteine 1132, and cysteine 1138 each contribute to the [4Fe-4S] cluster site.

It belongs to the helicase family. AddB/RexB type 1 subfamily. Heterodimer of AddA and AddB. Requires Mg(2+) as cofactor. It depends on [4Fe-4S] cluster as a cofactor.

Functionally, the heterodimer acts as both an ATP-dependent DNA helicase and an ATP-dependent, dual-direction single-stranded exonuclease. Recognizes the chi site generating a DNA molecule suitable for the initiation of homologous recombination. The AddB subunit has 5' -&gt; 3' nuclease activity but not helicase activity. In Bacillus mycoides (strain KBAB4) (Bacillus weihenstephanensis), this protein is ATP-dependent helicase/deoxyribonuclease subunit B.